We begin with the raw amino-acid sequence, 130 residues long: Glutamate-rich protein 4 (130 aa).

Residues 91–104 show a composition bias toward acidic residues; that stretch reads EEEEESSKEEEEDQ. The tract at residues 91–130 is disordered; that stretch reads EEEEESSKEEEEDQEPQRKQEEEHLEACPAPHPPDFEMMI. Positions 105–116 are enriched in basic and acidic residues; sequence EPQRKQEEEHLE.

In Homo sapiens (Human), this protein is Glutamate-rich protein 4 (ERICH4).